The primary structure comprises 455 residues: Argininosuccinate lyase (455 aa).

Belongs to the lyase 1 family. Argininosuccinate lyase subfamily.

The protein localises to the cytoplasm. The enzyme catalyses 2-(N(omega)-L-arginino)succinate = fumarate + L-arginine. It participates in amino-acid biosynthesis; L-arginine biosynthesis; L-arginine from L-ornithine and carbamoyl phosphate: step 3/3. This chain is Argininosuccinate lyase, found in Shewanella sp. (strain ANA-3).